Consider the following 37-residue polypeptide: Cytochrome b6-f complex subunit 5 (37 aa).

A helical membrane pass occupies residues 5 to 25 (FLFGIVLGLIPITLTGLFVTA).

This sequence belongs to the PetG family. In terms of assembly, the 4 large subunits of the cytochrome b6-f complex are cytochrome b6, subunit IV (17 kDa polypeptide, PetD), cytochrome f and the Rieske protein, while the 4 small subunits are PetG, PetL, PetM and PetN. The complex functions as a dimer.

It is found in the plastid. The protein localises to the chloroplast thylakoid membrane. Component of the cytochrome b6-f complex, which mediates electron transfer between photosystem II (PSII) and photosystem I (PSI), cyclic electron flow around PSI, and state transitions. PetG is required for either the stability or assembly of the cytochrome b6-f complex. The polypeptide is Cytochrome b6-f complex subunit 5 (Phalaenopsis aphrodite subsp. formosana (Moth orchid)).